Consider the following 46-residue polypeptide: Cystatin WCPI-3 (46 aa).

The short motif at 35–38 is the Secondary area of contact element; sequence VVAG.

Belongs to the cystatin family. Phytocystatin subfamily.

In terms of biological role, inhibitor of papain. This chain is Cystatin WCPI-3, found in Wisteria floribunda (Japanese wisteria).